A 1106-amino-acid polypeptide reads, in one-letter code: MPRRQDLNSVLVIGSGPIVIGQAAEFDYSGTQALRVLKDEGLRVILVNSNPATIMTDPEFADATYVEPITPETVEKIIAKERPDAVLPTLGGQTALNTALALDANGALEKYGVELIGADVDAINLGEDREAFKGVVERCGAESARSVIVHSMDEALAAAEQLGYPMVVRPSFTMGGLGSGLAYNETDLHRIAGAGIQYSPTSEVLLEESILGWKEYELEMMRDAKDNVVVVCSIENVDPVGVHTGDSVTVAPALTLTDREYQRMRDIAIAVIREVGVDTGGCNIQFAVEPDTGRVVVIEMNPRVSRSSALASKATGFPIAKIATKLSLGYTLDEIPNDITRKTPASFEPTLDYVVVKVPRFAFEKFPAADPTLTTTMKSVGEAMAIGRNFTEALQKAMRSLEQKGSAFSFARPAVEPGPNTVARLVSKTEETTTERLRNVQRALLAGATVEQVFGATSIDPWFLDQIQLLNETADLIREDPDLHPETLREAKRHGFSDAQIGELVHLDESVVRGIRHALDIRPVYKTVDTCAAEFEAFTPYHYSSYDRETEVAPHEKPSVMILGSGPNRIGQGIEFDYSCVHASMVLREAGYETVMVNCNPETVSTDYDISTRLYFEPLTFEDVMEVVEAERRTGGLLGVFVQLGGQTPLKLAADLKAAGVPILGTSPEAIDLAEDRGEFARVLTEAGLRQPKNGTAHDFEEASRIAHEIGYPVLVRPSYVLGGRGMEIVYDEASLKTYLDNATEVSPSRPALIDKFLEDAIEIDVDALFDGRDCYVGGIMEHIEEAGIHSGDSACVLPPITLAPDVVTRVREATEAIARGVGVKGLINLQFALASDVLYVIEANPRASRTVPFVSKATGVQMAKAAALIGTGRTVAQLRAEGVLPADHDGTTLPEGTPTAVKEVVLPFARFRTPEGTVVDSLLGPEMRSTGEVMGVDKYFDTAFAKAQAAAGGPLPTSGSLFVSVANKDKRSAVIPVKMFADLGFEIVSTGGTAEVLRRNGIESTVVAKIADAEGEEPTVADLITDGRIDLIFNTPSGGQAARGDGYQIRAAATSVGVPTMTTVSELGAALQAITAQRQYSWDVTSLQEHEQTLRERAAQEASRD.

The interval Met-1 to Glu-402 is carboxyphosphate synthetic domain. Residues Arg-129, Arg-169, Gly-175, Gly-176, Glu-208, Ile-210, Glu-215, Gly-241, Val-242, His-243, Gln-285, and Glu-299 each coordinate ATP. The region spanning Lys-133–Leu-328 is the ATP-grasp 1 domain. Residues Gln-285, Glu-299, and Asn-301 each coordinate Mg(2+). Mn(2+)-binding residues include Gln-285, Glu-299, and Asn-301. The segment at Gln-403–Thr-550 is oligomerization domain. The segment at Glu-551–Gly-953 is carbamoyl phosphate synthetic domain. Residues Ala-681 to Thr-872 enclose the ATP-grasp 2 domain. ATP is bound by residues Arg-717, Lys-756, Leu-758, Glu-763, Gly-788, Ile-789, His-790, Ser-791, Gln-831, and Glu-843. 3 residues coordinate Mg(2+): Gln-831, Glu-843, and Asn-845. 3 residues coordinate Mn(2+): Gln-831, Glu-843, and Asn-845. The region spanning Gly-954 to Asp-1106 is the MGS-like domain. Positions Gly-954–Asp-1106 are allosteric domain.

The protein belongs to the CarB family. Composed of two chains; the small (or glutamine) chain promotes the hydrolysis of glutamine to ammonia, which is used by the large (or ammonia) chain to synthesize carbamoyl phosphate. Tetramer of heterodimers (alpha,beta)4. The cofactor is Mg(2+). Mn(2+) is required as a cofactor.

The catalysed reaction is hydrogencarbonate + L-glutamine + 2 ATP + H2O = carbamoyl phosphate + L-glutamate + 2 ADP + phosphate + 2 H(+). It catalyses the reaction hydrogencarbonate + NH4(+) + 2 ATP = carbamoyl phosphate + 2 ADP + phosphate + 2 H(+). Its pathway is amino-acid biosynthesis; L-arginine biosynthesis; carbamoyl phosphate from bicarbonate: step 1/1. It participates in pyrimidine metabolism; UMP biosynthesis via de novo pathway; (S)-dihydroorotate from bicarbonate: step 1/3. Its function is as follows. Large subunit of the glutamine-dependent carbamoyl phosphate synthetase (CPSase). CPSase catalyzes the formation of carbamoyl phosphate from the ammonia moiety of glutamine, carbonate, and phosphate donated by ATP, constituting the first step of 2 biosynthetic pathways, one leading to arginine and/or urea and the other to pyrimidine nucleotides. The large subunit (synthetase) binds the substrates ammonia (free or transferred from glutamine from the small subunit), hydrogencarbonate and ATP and carries out an ATP-coupled ligase reaction, activating hydrogencarbonate by forming carboxy phosphate which reacts with ammonia to form carbamoyl phosphate. In Kocuria rhizophila (strain ATCC 9341 / DSM 348 / NBRC 103217 / DC2201), this protein is Carbamoyl phosphate synthase large chain.